A 395-amino-acid chain; its full sequence is Probable alcohol dehydrogenase EutG (395 aa).

NAD(+) contacts are provided by residues Asp-57, 116 to 120, 156 to 160, Lys-178, and 197 to 201; these read GSVLD, TTAGT, and VTEGV. The Fe cation site is built by Asp-212, His-216, His-281, and His-295. Residues His-295 and Asp-354 each coordinate NAD(+).

The protein belongs to the iron-containing alcohol dehydrogenase family. Requires Fe cation as cofactor.

The protein localises to the bacterial microcompartment. It catalyses the reaction ethanol + NAD(+) = acetaldehyde + NADH + H(+). It functions in the pathway amine and polyamine degradation; ethanolamine degradation. Probably acts on the acetaldehyde produced by the degradation of ethanolamine, producing ethanol. In terms of biological role, expression of the eut operon allows this bacteria to use ethanolamine (EA) as a carbon, nitrogen and energy source. It relies on cobalamin (vitamin B12) both as a cofactor for the ethanolamine ammonia-lyase (EAL) activity and to induce the operon. EA enhances bacterial survival in macrophages in a concentration-dependent manner, suggesting it is an important nutrient during infection. The sequence is that of Probable alcohol dehydrogenase EutG from Salmonella typhimurium (strain LT2 / SGSC1412 / ATCC 700720).